We begin with the raw amino-acid sequence, 85 residues long: MKPGIHPDYRPVLFHDTAADVYFLIGSTAETTRTHQHTDGNTYPYIALDVSSASHPIYTGKQRKTTTEGRIAGFNKRFAGFATKK.

This sequence belongs to the bacterial ribosomal protein bL31 family. Type B subfamily. As to quaternary structure, part of the 50S ribosomal subunit.

This is Large ribosomal subunit protein bL31B from Stutzerimonas stutzeri (strain A1501) (Pseudomonas stutzeri).